Consider the following 887-residue polypeptide: Transcriptional regulator DEF1 (887 aa).

The span at Met1 to Asn13 shows a compositional bias: polar residues. Disordered regions lie at residues Met1 to Gly117, Lys203 to Ala293, Asn311 to Leu330, Pro350 to Gln542, Asn555 to Lys578, Gln614 to Lys675, Gln696 to Gln758, and Asn813 to Asn887. Residues Ser57–Gln75 show a composition bias toward low complexity. Residues Leu76 to Thr107 are compositionally biased toward polar residues. Residues Glu199–Glu234 adopt a coiled-coil conformation. Positions Lys203–Ser231 are enriched in basic and acidic residues. The segment covering Ser232 to Glu254 has biased composition (low complexity). Over residues Ala261 to Glu270 the composition is skewed to polar residues. A compositionally biased stretch (low complexity) spans Asn311–Gln326. The span at Lys364–Ser393 shows a compositional bias: polar residues. 4 stretches are compositionally biased toward low complexity: residues Gln399–Gln408, Gln428–Leu456, Gln475–Thr519, and Gln526–Gln542. A compositionally biased stretch (low complexity) spans Tyr622–Gln640. Over residues Ser641–Ser658 the composition is skewed to polar residues. The segment covering Gln696–Thr710 has biased composition (basic and acidic residues). Positions Arg729 to Ser745 are enriched in polar residues. A compositionally biased stretch (low complexity) spans Thr829 to Pro844. Residues Thr865–Asn887 show a composition bias toward polar residues.

The protein localises to the nucleus. Its function is as follows. Transcriptional regulator involved in extension of germ tubes into elongated hyphae and maintenance of filamentous growth. Regulates expression of UME6. Acts in a pathway that regulates maintenance of hyphal growth by repressing hyphal-to-yeast transition and allows dissemination within host epithelial tissues. Dispensable for invasion into both host oral epithelial cells and enterocytes, but required for epithelial damage. This Candida albicans (strain SC5314 / ATCC MYA-2876) (Yeast) protein is Transcriptional regulator DEF1 (DEF1).